The following is a 192-amino-acid chain: Immunity protein YqcF (192 aa).

As to quaternary structure, probably interacts with cognate toxin YqcG but not with other non-cognate toxins. The interaction inhibits the toxic activity of YqcG.

Its subcellular location is the cytoplasm. Its function is as follows. Immunity component of one of 6 LXG toxin-immunity modules in this strain. They promote kin selection, mediate competition in biofilms, and drive spatial segregation of different strains, indicating that LXG toxins may help avoid warfare between strains in biofilms. Mediates intercellular competition during biofilm formation; disruption of the operon disadvantages the bacteria, but overexpression of the cognate immunity protein restores growth in competition with wild-type. In situ neutralizes the toxic effect of cognate toxin YqcG. Neutralizes the toxic activity of cognate toxin YqcG upon expression in E.coli. Does not have immunity protein activity on other LXG toxins. This chain is Immunity protein YqcF (yqcF), found in Bacillus subtilis (strain 168).